Consider the following 197-residue polypeptide: Adenine phosphoribosyltransferase (197 aa).

This sequence belongs to the purine/pyrimidine phosphoribosyltransferase family. As to quaternary structure, homodimer.

The protein resides in the cytoplasm. It carries out the reaction AMP + diphosphate = 5-phospho-alpha-D-ribose 1-diphosphate + adenine. The protein operates within purine metabolism; AMP biosynthesis via salvage pathway; AMP from adenine: step 1/1. Functionally, catalyzes a salvage reaction resulting in the formation of AMP, that is energically less costly than de novo synthesis. This Ralstonia nicotianae (strain ATCC BAA-1114 / GMI1000) (Ralstonia solanacearum) protein is Adenine phosphoribosyltransferase.